We begin with the raw amino-acid sequence, 354 residues long: Membrane progestin receptor beta (354 aa).

Topologically, residues 1–75 are cytoplasmic; it reads MTTAILQRLS…FFSLFQKHNE (75 aa). Residues 76–96 form a helical membrane-spanning segment; the sequence is VVNVWTHLLAALAVLLRFWAF. Over 97–111 the chain is Extracellular; that stretch reads VETEGLPWTSAHTLP. Residues 112 to 132 form a helical membrane-spanning segment; sequence LLLYVLSSITYLTFSLLAHLL. The Cytoplasmic portion of the chain corresponds to 133 to 174; sequence QSKSELSHYTFYFVDYVGVSVYQYGSALVHFFYASDQAWYER. Residues 175-195 form a helical membrane-spanning segment; the sequence is FWLFFLPAAAFCGWLSCTGCC. At 196-213 the chain is on the extracellular side; the sequence is YAKYRYRRPYPVMRKVCQ. A helical membrane pass occupies residues 214-234; that stretch reads VVPAGLAFILDISPVAHRVAL. Topologically, residues 235–243 are cytoplasmic; the sequence is CHLSGCQEQ. A helical membrane pass occupies residues 244–264; the sequence is AAWYHTLQIVFFLVSAYFFSC. The Extracellular portion of the chain corresponds to 265 to 283; sequence PVPEKYFPGSCDIVGHGHQ. The chain crosses the membrane as a helical span at residues 284-304; it reads IFHAFLSICTLSQLEAILLDY. Topologically, residues 305–319 are cytoplasmic; the sequence is KGRQEIFLHRHSPLS. Residues 320–340 traverse the membrane as a helical segment; the sequence is IYAACLSFFFLVACSGATAAL. The Extracellular portion of the chain corresponds to 341 to 354; it reads LREKIKARLSKKDS.

Belongs to the ADIPOR family.

The protein resides in the cell membrane. Its function is as follows. Steroid membrane receptor. Binds progesterone. May be involved in oocyte maturation. This Sus scrofa (Pig) protein is Membrane progestin receptor beta (PAQR8).